The primary structure comprises 504 residues: Doublesex- and mab-3-related transcription factor A1 (504 aa).

Basic and acidic residues predominate over residues 1 to 13 (MERSQCGSRDRGV). The interval 1–27 (MERSQCGSRDRGVSGRPHLAPGLVVAA) is disordered. A DNA-binding region (DM) is located at residues 97 to 144 (CARCRNHGVVSALKGHKRFCRWRDCACAKCTLIAERQRVMAAQVALRR). Disordered regions lie at residues 170–192 (GRAS…AAGA) and 266–307 (SISE…NESE). Residues 293–306 (RSLSSSDLESGNES) show a composition bias toward low complexity. Residues 327–362 (RDPLDILTKIFPNYRRSRLEGILRFCKGDVVQAIEQ) enclose the DMA domain.

The protein belongs to the DMRT family. In terms of tissue distribution, expressed in liver, kidney, pancreas, prostate and weakly detected in testis and ovary.

Its subcellular location is the nucleus. The protein is Doublesex- and mab-3-related transcription factor A1 (DMRTA1) of Homo sapiens (Human).